Here is a 205-residue protein sequence, read N- to C-terminus: Adenylyl-sulfate kinase (205 aa).

ATP is bound at residue 31–38 (GLSGAGKS). Residue serine 105 is the Phosphoserine intermediate of the active site.

It belongs to the APS kinase family.

The catalysed reaction is adenosine 5'-phosphosulfate + ATP = 3'-phosphoadenylyl sulfate + ADP + H(+). It functions in the pathway sulfur metabolism; hydrogen sulfide biosynthesis; sulfite from sulfate: step 2/3. Catalyzes the synthesis of activated sulfate. In Shewanella sp. (strain MR-7), this protein is Adenylyl-sulfate kinase.